Here is a 379-residue protein sequence, read N- to C-terminus: Chaperone protein DnaJ (379 aa).

A J domain is found at 7–72; sequence CYYETLEVER…DKRAAYDRYG (66 aa). The CR-type zinc-finger motif lies at 135-213; the sequence is GKTAQIEIPV…CTGSGRVTKE (79 aa). Positions 148, 151, 165, 168, 187, 190, 201, and 204 each coordinate Zn(2+). 4 CXXCXGXG motif repeats span residues 148–155, 165–172, 187–194, and 201–208; these read CESCSGTG, CSTCGGAG, CPSCQGRG, and CPSCTGSG.

Belongs to the DnaJ family. Homodimer. Zn(2+) is required as a cofactor.

Its subcellular location is the cytoplasm. Participates actively in the response to hyperosmotic and heat shock by preventing the aggregation of stress-denatured proteins and by disaggregating proteins, also in an autonomous, DnaK-independent fashion. Unfolded proteins bind initially to DnaJ; upon interaction with the DnaJ-bound protein, DnaK hydrolyzes its bound ATP, resulting in the formation of a stable complex. GrpE releases ADP from DnaK; ATP binding to DnaK triggers the release of the substrate protein, thus completing the reaction cycle. Several rounds of ATP-dependent interactions between DnaJ, DnaK and GrpE are required for fully efficient folding. Also involved, together with DnaK and GrpE, in the DNA replication of plasmids through activation of initiation proteins. This chain is Chaperone protein DnaJ, found in Rhodopseudomonas palustris (strain HaA2).